A 142-amino-acid polypeptide reads, in one-letter code: Galactose-6-phosphate isomerase subunit LacA 2 (142 aa).

This sequence belongs to the LacAB/RpiB family. In terms of assembly, heteromultimeric protein consisting of LacA and LacB.

The catalysed reaction is aldehydo-D-galactose 6-phosphate = keto-D-tagatose 6-phosphate. The protein operates within carbohydrate metabolism; D-galactose 6-phosphate degradation; D-tagatose 6-phosphate from D-galactose 6-phosphate: step 1/1. This is Galactose-6-phosphate isomerase subunit LacA 2 from Streptococcus pyogenes serotype M3 (strain ATCC BAA-595 / MGAS315).